The primary structure comprises 345 residues: Phosphoribosylformylglycinamidine cyclo-ligase (345 aa).

Belongs to the AIR synthase family.

It is found in the cytoplasm. The catalysed reaction is 2-formamido-N(1)-(5-O-phospho-beta-D-ribosyl)acetamidine + ATP = 5-amino-1-(5-phospho-beta-D-ribosyl)imidazole + ADP + phosphate + H(+). Its pathway is purine metabolism; IMP biosynthesis via de novo pathway; 5-amino-1-(5-phospho-D-ribosyl)imidazole from N(2)-formyl-N(1)-(5-phospho-D-ribosyl)glycinamide: step 2/2. The chain is Phosphoribosylformylglycinamidine cyclo-ligase from Salmonella typhi.